We begin with the raw amino-acid sequence, 77 residues long: Large ribosomal subunit protein bL28 (77 aa).

The tract at residues methionine 1–histidine 20 is disordered.

Belongs to the bacterial ribosomal protein bL28 family.

The sequence is that of Large ribosomal subunit protein bL28 from Pseudomonas fluorescens (strain Pf0-1).